A 259-amino-acid polypeptide reads, in one-letter code: Thiazole synthase (259 aa).

Catalysis depends on lysine 95, which acts as the Schiff-base intermediate with DXP. Residues glycine 156, 182–183, and 204–205 contribute to the 1-deoxy-D-xylulose 5-phosphate site; these read AG and AS.

It belongs to the ThiG family. As to quaternary structure, homotetramer. Forms heterodimers with either ThiH or ThiS.

The protein resides in the cytoplasm. It catalyses the reaction [ThiS sulfur-carrier protein]-C-terminal-Gly-aminoethanethioate + 2-iminoacetate + 1-deoxy-D-xylulose 5-phosphate = [ThiS sulfur-carrier protein]-C-terminal Gly-Gly + 2-[(2R,5Z)-2-carboxy-4-methylthiazol-5(2H)-ylidene]ethyl phosphate + 2 H2O + H(+). Its pathway is cofactor biosynthesis; thiamine diphosphate biosynthesis. Its function is as follows. Catalyzes the rearrangement of 1-deoxy-D-xylulose 5-phosphate (DXP) to produce the thiazole phosphate moiety of thiamine. Sulfur is provided by the thiocarboxylate moiety of the carrier protein ThiS. In vitro, sulfur can be provided by H(2)S. This Corynebacterium aurimucosum (strain ATCC 700975 / DSM 44827 / CIP 107346 / CN-1) (Corynebacterium nigricans) protein is Thiazole synthase.